Consider the following 115-residue polypeptide: NAD(P)H-quinone oxidoreductase subunit M (115 aa).

This sequence belongs to the complex I NdhM subunit family. As to quaternary structure, NDH-1 can be composed of about 15 different subunits; different subcomplexes with different compositions have been identified which probably have different functions.

It is found in the cellular thylakoid membrane. The catalysed reaction is a plastoquinone + NADH + (n+1) H(+)(in) = a plastoquinol + NAD(+) + n H(+)(out). The enzyme catalyses a plastoquinone + NADPH + (n+1) H(+)(in) = a plastoquinol + NADP(+) + n H(+)(out). Its function is as follows. NDH-1 shuttles electrons from an unknown electron donor, via FMN and iron-sulfur (Fe-S) centers, to quinones in the respiratory and/or the photosynthetic chain. The immediate electron acceptor for the enzyme in this species is believed to be plastoquinone. Couples the redox reaction to proton translocation, and thus conserves the redox energy in a proton gradient. Cyanobacterial NDH-1 also plays a role in inorganic carbon-concentration. The chain is NAD(P)H-quinone oxidoreductase subunit M from Parasynechococcus marenigrum (strain WH8102).